A 295-amino-acid chain; its full sequence is Acetylglutamate kinase (295 aa).

Residues 64-65 (GG), arginine 86, and asparagine 190 each bind substrate.

This sequence belongs to the acetylglutamate kinase family. ArgB subfamily.

It is found in the cytoplasm. It catalyses the reaction N-acetyl-L-glutamate + ATP = N-acetyl-L-glutamyl 5-phosphate + ADP. It functions in the pathway amino-acid biosynthesis; L-arginine biosynthesis; N(2)-acetyl-L-ornithine from L-glutamate: step 2/4. In terms of biological role, catalyzes the ATP-dependent phosphorylation of N-acetyl-L-glutamate. In Heliobacterium modesticaldum (strain ATCC 51547 / Ice1), this protein is Acetylglutamate kinase.